The following is a 296-amino-acid chain: NAD kinase (296 aa).

Catalysis depends on Asp73, which acts as the Proton acceptor. NAD(+)-binding positions include 73-74 (DG), Lys78, 151-152 (NE), Arg178, Asp180, and 191-196 (TAHAMS).

The protein belongs to the NAD kinase family. The cofactor is a divalent metal cation.

It is found in the cytoplasm. It carries out the reaction NAD(+) + ATP = ADP + NADP(+) + H(+). Involved in the regulation of the intracellular balance of NAD and NADP, and is a key enzyme in the biosynthesis of NADP. Catalyzes specifically the phosphorylation on 2'-hydroxyl of the adenosine moiety of NAD to yield NADP. The protein is NAD kinase of Francisella tularensis subsp. mediasiatica (strain FSC147).